The primary structure comprises 277 residues: Thiamine thiazole synthase (277 aa).

NAD(+)-binding positions include Ser36, Gly63, Val126, and 152–154; that span reads HVD. Fe cation contacts are provided by Asp154 and His169. Met230 serves as a coordination point for NAD(+). Arg240 is a glycine binding site.

The protein belongs to the THI4 family. In terms of assembly, homooctamer; tetramer of dimers. Fe(2+) serves as cofactor.

It carries out the reaction hydrogen sulfide + glycine + NAD(+) = ADP-5-ethyl-4-methylthiazole-2-carboxylate + nicotinamide + 3 H2O + H(+). Its pathway is cofactor biosynthesis; thiamine diphosphate biosynthesis. In terms of biological role, involved in the biosynthesis of the thiazole moiety of thiamine. Catalyzes the conversion of NAD and glycine to adenosine diphosphate 5-(2-hydroxyethyl)-4-methylthiazole-2-carboxylate (ADT), an adenylated thiazole intermediate, using free sulfide as a source of sulfur. The sequence is that of Thiamine thiazole synthase from Fervidobacterium nodosum (strain ATCC 35602 / DSM 5306 / Rt17-B1).